A 367-amino-acid polypeptide reads, in one-letter code: Phosphoribosylaminoimidazole-succinocarboxamide synthase (367 aa).

Belongs to the SAICAR synthetase family.

The enzyme catalyses 5-amino-1-(5-phospho-D-ribosyl)imidazole-4-carboxylate + L-aspartate + ATP = (2S)-2-[5-amino-1-(5-phospho-beta-D-ribosyl)imidazole-4-carboxamido]succinate + ADP + phosphate + 2 H(+). Its pathway is purine metabolism; IMP biosynthesis via de novo pathway; 5-amino-1-(5-phospho-D-ribosyl)imidazole-4-carboxamide from 5-amino-1-(5-phospho-D-ribosyl)imidazole-4-carboxylate: step 1/2. In Shewanella sp. (strain MR-4), this protein is Phosphoribosylaminoimidazole-succinocarboxamide synthase.